A 101-amino-acid chain; its full sequence is Glutenin, high molecular weight subunit PC256 (101 aa).

Residues 1-27 (EKLGQGQQPRQWLQPRQGQQGYYPTSP) are compositionally biased toward polar residues. Residues 1 to 65 (EKLGQGQQPR…QGYDSPYHVS (65 aa)) form a disordered region. Low complexity predominate over residues 41 to 62 (QGYYPTSPQQSGQGQQGYDSPY).

It belongs to the gliadin/glutenin family. As to quaternary structure, disulfide-bridge linked aggregates.

Glutenins are high-molecular weight seed storage proteins of wheat endosperm. Thought to be responsible for the visco-elastic property of wheat dough. This chain is Glutenin, high molecular weight subunit PC256, found in Triticum aestivum (Wheat).